Here is a 365-residue protein sequence, read N- to C-terminus: DNA replication and repair protein RecF (365 aa).

30 to 37 (GDNGEGKT) is a binding site for ATP.

It belongs to the RecF family.

The protein resides in the cytoplasm. In terms of biological role, the RecF protein is involved in DNA metabolism; it is required for DNA replication and normal SOS inducibility. RecF binds preferentially to single-stranded, linear DNA. It also seems to bind ATP. The sequence is that of DNA replication and repair protein RecF from Leptospira interrogans serogroup Icterohaemorrhagiae serovar Lai (strain 56601).